A 416-amino-acid polypeptide reads, in one-letter code: Adenylosuccinate synthetase (416 aa).

GTP is bound by residues 11 to 17 (GDEGKGK) and 39 to 41 (GHT). The active-site Proton acceptor is Asp-12. Residues Asp-12 and Gly-39 each contribute to the Mg(2+) site. IMP contacts are provided by residues 12–15 (DEGK), 37–40 (NAGH), Thr-125, Arg-139, Gln-214, Thr-229, and Arg-290. Residue His-40 is the Proton donor of the active site. A substrate-binding site is contributed by 286–292 (TTTGRPR). GTP contacts are provided by residues Arg-292, 318 to 320 (KLD), and 405 to 407 (SLG).

Belongs to the adenylosuccinate synthetase family. Homodimer. Requires Mg(2+) as cofactor.

The protein resides in the cytoplasm. It catalyses the reaction IMP + L-aspartate + GTP = N(6)-(1,2-dicarboxyethyl)-AMP + GDP + phosphate + 2 H(+). It functions in the pathway purine metabolism; AMP biosynthesis via de novo pathway; AMP from IMP: step 1/2. Its function is as follows. Plays an important role in the de novo pathway of purine nucleotide biosynthesis. Catalyzes the first committed step in the biosynthesis of AMP from IMP. The polypeptide is Adenylosuccinate synthetase (Picrophilus torridus (strain ATCC 700027 / DSM 9790 / JCM 10055 / NBRC 100828 / KAW 2/3)).